Reading from the N-terminus, the 521-residue chain is MLAKFAALAALVASANAQAVCSLTAETHPSLNWSKCTSSGCTNVAGSITVDANWRWTHITSGSTNCYSGNEWDTSLCSTNTDCATKCCVDGAEYSSTYGIQTSGNSLSLQFVTKGSYSTNIGSRTYLMNGADAYQGFELLGNEFTFDVDVSGTGCGLNGALYFVSMDLDGGKAKYTNNKAGAKYGTGYCDAQCPRDLKYINGIANVEGWTPSTNDANAGIGDHGTCCSEMDIWEANKVSTAFTPHPCTTIEQHMCEGDSCGGTYSDDRYGGTCDADGCDFNSYRMGNTTFYGEGKTVDTSSKFTVVTQFIKDSAGDLAEIKRFYVQNGKVIENSQSNVDGVSGNSITQSFCNAQKTAFGDIDDFNKKGGLKQMGKALAKPMVLVMSIWDDHAANMLWLDSTYPVEGGPGAYRGECPTTSGVPAEVEANAPNSKVIFSNIKFGPIGSTFSGGSSGTPPSNPSSSVKPVTSTAKPSSTSTASNPSGTGAAHWAQCGGIGFSGPTTCQSPYTCQKINDYYSQCV.

The signal sequence occupies residues 1–17 (MLAKFAALAALVASANA). The catalytic stretch occupies residues 18 to 450 (QAVCSLTAET…FGPIGSTFSG (433 aa)). N-linked (GlcNAc...) asparagine glycosylation occurs at Asn-32. The active-site Nucleophile is Glu-229. Glu-234 acts as the Proton donor in catalysis. Asn-287 is a glycosylation site (N-linked (GlcNAc...) asparagine). Residues 447-486 (TFSGGSSGTPPSNPSSSVKPVTSTAKPSSTSTASNPSGTG) are disordered. Residues 451-485 (GSSGTPPSNPSSSVKPVTSTAKPSSTSTASNPSGT) form a linker region. Positions 485–521 (TGAAHWAQCGGIGFSGPTTCQSPYTCQKINDYYSQCV) constitute a CBM1 domain. 2 disulfide bridges follow: Cys-493/Cys-510 and Cys-504/Cys-520.

It belongs to the glycosyl hydrolase 7 (cellulase C) family.

Its subcellular location is the secreted. The catalysed reaction is Hydrolysis of (1-&gt;4)-beta-D-glucosidic linkages in cellulose and cellotetraose, releasing cellobiose from the non-reducing ends of the chains.. This chain is Exoglucanase 1 (cbh-1), found in Neurospora crassa (strain ATCC 24698 / 74-OR23-1A / CBS 708.71 / DSM 1257 / FGSC 987).